Consider the following 194-residue polypeptide: Holliday junction branch migration complex subunit RuvA (194 aa).

Residues 1-64 are domain I; it reads MIARLSGILV…EDAQLLYGFG (64 aa). Positions 65 to 141 are domain II; sequence SDQERATFRQ…FAIDGGTALA (77 aa). The tract at residues 141–144 is flexible linker; sequence AGSN. The segment at 145-194 is domain III; sequence PAKSASSDVLNALLALGYNEREALAAVKQLPADIAVAEGIKLSLKSLSKT.

The protein belongs to the RuvA family. In terms of assembly, homotetramer. Forms an RuvA(8)-RuvB(12)-Holliday junction (HJ) complex. HJ DNA is sandwiched between 2 RuvA tetramers; dsDNA enters through RuvA and exits via RuvB. An RuvB hexamer assembles on each DNA strand where it exits the tetramer. Each RuvB hexamer is contacted by two RuvA subunits (via domain III) on 2 adjacent RuvB subunits; this complex drives branch migration. In the full resolvosome a probable DNA-RuvA(4)-RuvB(12)-RuvC(2) complex forms which resolves the HJ.

It localises to the cytoplasm. In terms of biological role, the RuvA-RuvB-RuvC complex processes Holliday junction (HJ) DNA during genetic recombination and DNA repair, while the RuvA-RuvB complex plays an important role in the rescue of blocked DNA replication forks via replication fork reversal (RFR). RuvA specifically binds to HJ cruciform DNA, conferring on it an open structure. The RuvB hexamer acts as an ATP-dependent pump, pulling dsDNA into and through the RuvAB complex. HJ branch migration allows RuvC to scan DNA until it finds its consensus sequence, where it cleaves and resolves the cruciform DNA. In Methylobacillus flagellatus (strain ATCC 51484 / DSM 6875 / VKM B-1610 / KT), this protein is Holliday junction branch migration complex subunit RuvA.